A 213-amino-acid polypeptide reads, in one-letter code: Probable transaldolase (213 aa).

Catalysis depends on Lys83, which acts as the Schiff-base intermediate with substrate.

The protein belongs to the transaldolase family. Type 3B subfamily.

The protein resides in the cytoplasm. It carries out the reaction D-sedoheptulose 7-phosphate + D-glyceraldehyde 3-phosphate = D-erythrose 4-phosphate + beta-D-fructose 6-phosphate. The protein operates within carbohydrate degradation; pentose phosphate pathway; D-glyceraldehyde 3-phosphate and beta-D-fructose 6-phosphate from D-ribose 5-phosphate and D-xylulose 5-phosphate (non-oxidative stage): step 2/3. Transaldolase is important for the balance of metabolites in the pentose-phosphate pathway. The protein is Probable transaldolase of Oceanobacillus iheyensis (strain DSM 14371 / CIP 107618 / JCM 11309 / KCTC 3954 / HTE831).